Here is a 791-residue protein sequence, read N- to C-terminus: RAS guanyl-releasing protein 1 (791 aa).

Residues 49–172 (LGKLSKGASL…RLIDTAQINS (124 aa)) enclose the N-terminal Ras-GEF domain. The ras exchanger motif region; required for transforming activity stretch occupies residues 53 to 106 (SKGASLDDLIQMCIQAFDLDGNMGQNSELLQIMLTMHGFLLPSTELLMKLRTLY). Residues 201–432 (EPQELAEHLT…YELSYAREPR (232 aa)) enclose the Ras-GEF domain. EF-hand domains lie at 466-501 (HVQR…FPFS) and 502-528 (FCVM…ASSI). Ca(2+) is bound by residues aspartate 479, aspartate 481, aspartate 483, tyrosine 485, glutamate 490, aspartate 506, aspartate 508, glutamate 510, and glutamate 517. The segment at 537–587 (LHNFQETTYLRPTFCDNCAGFLWGVIKQGYRCKDCGMNCHKQCKELVVFEC) adopts a Phorbol-ester/DAG-type zinc-finger fold. A compositionally biased stretch (polar residues) spans 683–695 (QVPSPQRSRTPGL). Residues 683–715 (QVPSPQRSRTPGLTSHLPISPMPSPCPSPVPTR) form a disordered region. Residues 702–712 (SPMPSPCPSPV) are compositionally biased toward pro residues. Residues 728 to 785 (IRKARAELRGGKAGIQELEKEKALLKEENTTLKIQLKDAQRRVETLRAELRKYVLDSD) are a coiled coil.

Belongs to the RASGRP family.

It is found in the cytoplasm. The protein localises to the cytosol. Its subcellular location is the cell membrane. The protein resides in the golgi apparatus membrane. It localises to the endoplasmic reticulum membrane. Regulated by F-actin polymerization and probably by calcium. Functionally, functions as a diacylglycerol (DAG)-regulated nucleotide exchange factor specifically activating Ras through the exchange of bound GDP for GTP. This Xenopus tropicalis (Western clawed frog) protein is RAS guanyl-releasing protein 1 (rasgrp1).